Consider the following 224-residue polypeptide: Urease accessory protein UreF (224 aa).

Belongs to the UreF family. UreD, UreF and UreG form a complex that acts as a GTP-hydrolysis-dependent molecular chaperone, activating the urease apoprotein by helping to assemble the nickel containing metallocenter of UreC. The UreE protein probably delivers the nickel.

Its subcellular location is the cytoplasm. Required for maturation of urease via the functional incorporation of the urease nickel metallocenter. This is Urease accessory protein UreF from Pseudomonas putida (strain W619).